A 108-amino-acid chain; its full sequence is Trissin (108 aa).

The N-terminal stretch at 1–29 (MTKTTMHWLAHFQIILLCIWLMCPPSSQA) is a signal peptide. Disulfide bonds link C32–C43, C35–C52, and C39–C51. The propeptide occupies 57 to 108 (RKRSDPDALRQSSNRRLIDFILLQGRALFTQELRERRHNGTLMDLGLNTYYP).

The protein resides in the secreted. Functionally, activates the G-protein coupled receptor TrissinR in vitro, leading to increased intracellular calcium ion levels. The polypeptide is Trissin (Drosophila melanogaster (Fruit fly)).